The following is a 281-amino-acid chain: MKLTEEQVAQYKKDGFLIIRNFNTTEEIDIVRGEMKKLIDELDTPSTISIFTTSEQERKVDDYFLGSGDKIRYFFEKGSIEDGKLIVPKDMAFNKVGHALHDLNPKFEEFSYSQKIHDLIYSLGIYNKALSGIMYIFKNQKIGGEVDIHQDSTFLHTTPLTTHAIWFAFEDSTIENGCLRGLPGSHTEGITRRFITDPNSESGCSFIKLAEDKQYNKSDFVALECKKGDIILLDGSVVHYSEPNTSPNSRHAYTLHFIEGDNGVIYENDNWLQSAKPFRVL.

2-oxoglutarate-binding positions include Lys95, Met134, His149–Asp151, and Trp166. Residues His149 and Asp151 each contribute to the Fe cation site. His239 lines the Fe cation pocket. 2-oxoglutarate-binding residues include Ser241 and Arg250.

The protein belongs to the PhyH family. PHYHD1 subfamily. It depends on Fe cation as a cofactor.

In terms of biological role, has alpha-ketoglutarate-dependent dioxygenase activity. Does not show detectable activity towards fatty acid CoA thioesters. Is not expected to be active with phytanoyl CoA. The polypeptide is Phytanoyl-CoA dioxygenase domain-containing protein 1 homolog (phyhd1) (Dictyostelium discoideum (Social amoeba)).